The sequence spans 858 residues: Tetratricopeptide repeat protein 7A (858 aa).

The residue at position 51 (Ser-51) is a Phosphoserine. TPR repeat units follow at residues 121–157, 177–210, 414–447, 497–531, 533–565, and 566–599; these read CEAM…MENK, ERLP…AQVF, FHLW…RPSD, YSLQ…APSD, QVIL…RKDD, and AHAL…HPEN. Position 182 is a phosphoserine (Ser-182). Residues Ser-647, Ser-678, Ser-679, and Ser-690 each carry the phosphoserine modification. Phosphothreonine is present on Thr-693. TPR repeat units lie at residues 745-778, 780-812, and 813-846; these read HSVL…NPDG, RIMH…QSTC, and HEAW…EASS.

In terms of assembly, component of a phosphatidylinositol 4-kinase (PI4K) complex, composed of PI4KA, EFR3 (EFR3A or EFR3B), TTC7 (TTC7A or TTC7B) and HYCC (HYCC1 or HYCC2). Interacts with PI4KA. Interaction with PI4KA is direct. Interacts with EFR3 (EFR3A or EFR3B), interaction is direct. Interacts with HYCC (HYCC1 or HYCC2), interaction is direct. Association with the PI4K complex is strongly reduced by TMEM150A. As to expression, expressed in epithelial cells of the intestine, thymus, and pancreas (at protein level).

Its subcellular location is the cytoplasm. It is found in the cell membrane. In terms of biological role, component of a complex required to localize phosphatidylinositol 4-kinase (PI4K) to the plasma membrane. The complex acts as a regulator of phosphatidylinositol 4-phosphate (PtdIns(4)P) synthesis. In the complex, plays a central role in bridging PI4KA to EFR3B and HYCC1, via direct interactions. The polypeptide is Tetratricopeptide repeat protein 7A (Homo sapiens (Human)).